The primary structure comprises 924 residues: Protein translocase subunit SecA (924 aa).

ATP contacts are provided by residues Q87, 105-109, and D515; that span reads GEGKT. C908, C910, C919, and H920 together coordinate Zn(2+).

It belongs to the SecA family. As to quaternary structure, monomer and homodimer. Part of the essential Sec protein translocation apparatus which comprises SecA, SecYEG and auxiliary proteins SecDF-YajC and YidC. Requires Zn(2+) as cofactor.

Its subcellular location is the cell inner membrane. The protein localises to the cytoplasm. The catalysed reaction is ATP + H2O + cellular proteinSide 1 = ADP + phosphate + cellular proteinSide 2.. Functionally, part of the Sec protein translocase complex. Interacts with the SecYEG preprotein conducting channel. Has a central role in coupling the hydrolysis of ATP to the transfer of proteins into and across the cell membrane, serving both as a receptor for the preprotein-SecB complex and as an ATP-driven molecular motor driving the stepwise translocation of polypeptide chains across the membrane. This is Protein translocase subunit SecA from Cupriavidus pinatubonensis (strain JMP 134 / LMG 1197) (Cupriavidus necator (strain JMP 134)).